A 241-amino-acid polypeptide reads, in one-letter code: tRNA (guanine-N(1)-)-methyltransferase (241 aa).

S-adenosyl-L-methionine contacts are provided by residues glycine 112 and 131-136 (LGDFVL).

This sequence belongs to the RNA methyltransferase TrmD family. As to quaternary structure, homodimer.

It is found in the cytoplasm. The enzyme catalyses guanosine(37) in tRNA + S-adenosyl-L-methionine = N(1)-methylguanosine(37) in tRNA + S-adenosyl-L-homocysteine + H(+). Its function is as follows. Specifically methylates guanosine-37 in various tRNAs. This Clostridium novyi (strain NT) protein is tRNA (guanine-N(1)-)-methyltransferase.